Here is a 285-residue protein sequence, read N- to C-terminus: tRNA pseudouridine synthase A (285 aa).

Asp69 acts as the Nucleophile in catalysis. Tyr127 lines the substrate pocket.

Belongs to the tRNA pseudouridine synthase TruA family. Homodimer.

It catalyses the reaction uridine(38/39/40) in tRNA = pseudouridine(38/39/40) in tRNA. Its function is as follows. Formation of pseudouridine at positions 38, 39 and 40 in the anticodon stem and loop of transfer RNAs. This chain is tRNA pseudouridine synthase A, found in Pseudomonas aeruginosa (strain ATCC 15692 / DSM 22644 / CIP 104116 / JCM 14847 / LMG 12228 / 1C / PRS 101 / PAO1).